A 395-amino-acid chain; its full sequence is Acetylornithine aminotransferase (395 aa).

Pyridoxal 5'-phosphate-binding positions include 117–118 (GA) and phenylalanine 144. Residue arginine 147 coordinates N(2)-acetyl-L-ornithine. 230–233 (DEVQ) provides a ligand contact to pyridoxal 5'-phosphate. N6-(pyridoxal phosphate)lysine is present on lysine 259. Serine 285 contributes to the N(2)-acetyl-L-ornithine binding site. Threonine 286 serves as a coordination point for pyridoxal 5'-phosphate.

This sequence belongs to the class-III pyridoxal-phosphate-dependent aminotransferase family. ArgD subfamily. Homodimer. Pyridoxal 5'-phosphate serves as cofactor.

It localises to the cytoplasm. The enzyme catalyses N(2)-acetyl-L-ornithine + 2-oxoglutarate = N-acetyl-L-glutamate 5-semialdehyde + L-glutamate. The protein operates within amino-acid biosynthesis; L-arginine biosynthesis; N(2)-acetyl-L-ornithine from L-glutamate: step 4/4. This is Acetylornithine aminotransferase from Methanosarcina mazei (strain ATCC BAA-159 / DSM 3647 / Goe1 / Go1 / JCM 11833 / OCM 88) (Methanosarcina frisia).